The chain runs to 86 residues: Large ribosomal subunit protein bL27 (86 aa).

Belongs to the bacterial ribosomal protein bL27 family.

This is Large ribosomal subunit protein bL27 from Flavobacterium johnsoniae (strain ATCC 17061 / DSM 2064 / JCM 8514 / BCRC 14874 / CCUG 350202 / NBRC 14942 / NCIMB 11054 / UW101) (Cytophaga johnsonae).